The primary structure comprises 375 residues: Growth/differentiation factor 8 (375 aa).

Positions 1 to 18 are cleaved as a signal peptide; the sequence is MQKLQIFVYIYLFMLTVA. The propeptide occupies 19–266; that stretch reads GPVDLNENSE…VTDTPKRARR (248 aa). Asn-48 and Asn-71 each carry an N-linked (GlcNAc...) asparagine glycan. Disulfide bonds link Cys-272/Cys-282, Cys-281/Cys-340, Cys-309/Cys-372, and Cys-313/Cys-374.

Belongs to the TGF-beta family. Homodimer; disulfide-linked. Interacts with WFIKKN2, leading to inhibit its activity. Interacts with FSTL3. Synthesized as large precursor molecule that undergoes proteolytic cleavage to generate an N-terminal propeptide and a disulfide linked C-terminal dimer, which is the biologically active molecule. The circulating form consists of a latent complex of the C-terminal dimer and other proteins, including its propeptide, which maintain the C-terminal dimer in a latent, inactive state. Ligand activation requires additional cleavage of the prodomain by a tolloid-like metalloproteinase.

It is found in the secreted. Functionally, acts specifically as a negative regulator of skeletal muscle growth. This chain is Growth/differentiation factor 8 (MSTN), found in Sylvicapra grimmia (Grey duiker).